The primary structure comprises 417 residues: MQALVLLLWTGALLGHGSSQNVPSSSEGSPVPDSTGEPVEEEDPFFKVPVNKLAAAVSNFGYDLYRLRSSASPTGNVLLSPLSVATALSALSLGAEHRTESVIHRALYYDLITNPDIHSTYKELLASVTAPEKNLKSASRIVFERKLRVKSSFVAPLEKSYGTRPRILTGNPRVDLQEINNWVQAQMKGKIARSTREMPSALSILLLGVAYFKGQWVTKFDSRKTTLQDFHLDEDRTVRVPMMSDPKAILRYGLDSDLNCKIAQLPLTGSMSIIFFLPLTVTQNLTMIEESLTSEFIHDIDRELKTIQAVLTVPKLKLSFEGELTKSLQDMKLQSLFESPDFSKITGKPVKLTQVEHRAAFEWNEEGAGSSPSPGLQPVRLTFPLDYHLNQPFLFVLRDTDTGALLFIGRILDPSST.

A signal peptide spans 1-19 (MQALVLLLWTGALLGHGSS). Residues 17-41 (GSSQNVPSSSEGSPVPDSTGEPVEE) form a disordered region. Over residues 18–28 (SSQNVPSSSEG) the composition is skewed to polar residues. Position 20 is a pyrrolidone carboxylic acid (Q20). S24 bears the Phosphoserine mark. N284 carries an N-linked (GlcNAc...) asparagine glycan.

This sequence belongs to the serpin family. As to quaternary structure, interacts with PNPLA2; this interaction stimulates the phospholipase A2 activity of PNPLA2. In terms of tissue distribution, highly expressed in the liver, gastric glandular mucosa and renal tubules. It is also expressed in the brain, heart, lung retina and testes.

The protein resides in the secreted. Its subcellular location is the melanosome. Functionally, neurotrophic protein; induces extensive neuronal differentiation in retinoblastoma cells. Potent inhibitor of angiogenesis. As it does not undergo the S (stressed) to R (relaxed) conformational transition characteristic of active serpins, it exhibits no serine protease inhibitory activity. The protein is Pigment epithelium-derived factor (Serpinf1) of Mus musculus (Mouse).